The primary structure comprises 883 residues: Phosphoenolpyruvate carboxylase (883 aa).

Catalysis depends on residues His-138 and Lys-546.

Belongs to the PEPCase type 1 family. Mg(2+) is required as a cofactor.

The catalysed reaction is oxaloacetate + phosphate = phosphoenolpyruvate + hydrogencarbonate. In terms of biological role, forms oxaloacetate, a four-carbon dicarboxylic acid source for the tricarboxylic acid cycle. The chain is Phosphoenolpyruvate carboxylase from Escherichia coli O81 (strain ED1a).